A 243-amino-acid chain; its full sequence is 1-(5-phosphoribosyl)-5-[(5-phosphoribosylamino)methylideneamino] imidazole-4-carboxamide isomerase (243 aa).

Residue Asp8 is the Proton acceptor of the active site. Asp129 acts as the Proton donor in catalysis.

This sequence belongs to the HisA/HisF family.

The protein resides in the cytoplasm. The enzyme catalyses 1-(5-phospho-beta-D-ribosyl)-5-[(5-phospho-beta-D-ribosylamino)methylideneamino]imidazole-4-carboxamide = 5-[(5-phospho-1-deoxy-D-ribulos-1-ylimino)methylamino]-1-(5-phospho-beta-D-ribosyl)imidazole-4-carboxamide. It functions in the pathway amino-acid biosynthesis; L-histidine biosynthesis; L-histidine from 5-phospho-alpha-D-ribose 1-diphosphate: step 4/9. This chain is 1-(5-phosphoribosyl)-5-[(5-phosphoribosylamino)methylideneamino] imidazole-4-carboxamide isomerase, found in Parvibaculum lavamentivorans (strain DS-1 / DSM 13023 / NCIMB 13966).